The sequence spans 450 residues: Exodeoxyribonuclease 7 large subunit (450 aa).

It belongs to the XseA family. In terms of assembly, heterooligomer composed of large and small subunits.

It is found in the cytoplasm. The enzyme catalyses Exonucleolytic cleavage in either 5'- to 3'- or 3'- to 5'-direction to yield nucleoside 5'-phosphates.. In terms of biological role, bidirectionally degrades single-stranded DNA into large acid-insoluble oligonucleotides, which are then degraded further into small acid-soluble oligonucleotides. The protein is Exodeoxyribonuclease 7 large subunit of Listeria monocytogenes serotype 4b (strain CLIP80459).